The chain runs to 98 residues: NADH-ubiquinone oxidoreductase chain 4L (98 aa).

Helical transmembrane passes span 1 to 21 (MSLVHMNIALAFTVALLGLLM), 29 to 49 (SLLCLEGMMLTLFIMGTIMIL), and 61 to 81 (IILLVFAACEAAVGLSLLVMV).

This sequence belongs to the complex I subunit 4L family. In terms of assembly, core subunit of respiratory chain NADH dehydrogenase (Complex I) which is composed of 45 different subunits.

It is found in the mitochondrion inner membrane. It catalyses the reaction a ubiquinone + NADH + 5 H(+)(in) = a ubiquinol + NAD(+) + 4 H(+)(out). Its function is as follows. Core subunit of the mitochondrial membrane respiratory chain NADH dehydrogenase (Complex I) which catalyzes electron transfer from NADH through the respiratory chain, using ubiquinone as an electron acceptor. Part of the enzyme membrane arm which is embedded in the lipid bilayer and involved in proton translocation. The sequence is that of NADH-ubiquinone oxidoreductase chain 4L (MT-ND4L) from Sorex unguiculatus (Long-clawed shrew).